Here is a 1311-residue protein sequence, read N- to C-terminus: Nephrocystin-3 (1311 aa).

Residues 81 to 183 (SKNNEIASMQ…LQRLQAQGIQ (103 aa)) adopt a coiled-coil conformation. 9 TPR repeats span residues 889–923 (LSYW…EEKM), 927–960 (ADLY…RETA), 969–1002 (AQSL…SENA), 1011–1044 (AREL…RQKS), 1077–1110 (ARTL…RERV), 1119–1152 (AQSI…RRRA), 1161–1194 (AYTV…RQKS), 1203–1236 (ATAL…YEDS), and 1245–1278 (GETL…KETE).

It localises to the cell projection. The protein localises to the cilium. In terms of biological role, required for normal ciliary development and function. Inhibits disheveled-1-induced canonical Wnt-signaling activity and may also play a role in the control of non-canonical Wnt signaling that regulates planar cell polarity. Probably acts as a molecular switch between different Wnt signaling pathways. Required for proper convergent extension cell movements. The polypeptide is Nephrocystin-3 (nphp3) (Xenopus tropicalis (Western clawed frog)).